Here is a 366-residue protein sequence, read N- to C-terminus: S-adenosylmethionine synthase 1 (366 aa).

A K(+)-binding site is contributed by Glu-18. Residues Glu-31 and Gln-74 each contribute to the L-methionine site. Residues 142–144 (DGN), 210–213 (SGRF), Asp-221, 227–228 (RK), Ala-244, Lys-248, and Lys-252 contribute to the ATP site. An L-methionine-binding site is contributed by Asp-221. Lys-252 is an L-methionine binding site.

The protein belongs to the AdoMet synthase family. Homotetramer. The cofactor is Mn(2+). It depends on Mg(2+) as a cofactor. Co(2+) is required as a cofactor. K(+) serves as cofactor.

It is found in the cytoplasm. It carries out the reaction L-methionine + ATP + H2O = S-adenosyl-L-methionine + phosphate + diphosphate. Its pathway is amino-acid biosynthesis; S-adenosyl-L-methionine biosynthesis; S-adenosyl-L-methionine from L-methionine: step 1/1. Catalyzes the formation of S-adenosylmethionine from methionine and ATP. The reaction comprises two steps that are both catalyzed by the same enzyme: formation of S-adenosylmethionine (AdoMet) and triphosphate, and subsequent hydrolysis of the triphosphate. This chain is S-adenosylmethionine synthase 1 (SAMS1), found in Pisum sativum (Garden pea).